We begin with the raw amino-acid sequence, 60 residues long: Large ribosomal subunit protein uL30 (60 aa).

Belongs to the universal ribosomal protein uL30 family. Part of the 50S ribosomal subunit.

The polypeptide is Large ribosomal subunit protein uL30 (Lysinibacillus sphaericus (strain C3-41)).